Here is a 473-residue protein sequence, read N- to C-terminus: Bifunctional protein HldE (473 aa).

Positions 1–316 are ribokinase; it reads MILPDFSLAR…AIAIHGQRAP (316 aa). 193–196 is a binding site for ATP; the sequence is NLSE. Asp262 is an active-site residue. The cytidylyltransferase stretch occupies residues 342-473; the sequence is VTNGCFDLLH…TRIIEAIRNG (132 aa).

It in the N-terminal section; belongs to the carbohydrate kinase PfkB family. In the C-terminal section; belongs to the cytidylyltransferase family. In terms of assembly, homodimer.

The enzyme catalyses D-glycero-beta-D-manno-heptose 7-phosphate + ATP = D-glycero-beta-D-manno-heptose 1,7-bisphosphate + ADP + H(+). The catalysed reaction is D-glycero-beta-D-manno-heptose 1-phosphate + ATP + H(+) = ADP-D-glycero-beta-D-manno-heptose + diphosphate. Its pathway is nucleotide-sugar biosynthesis; ADP-L-glycero-beta-D-manno-heptose biosynthesis; ADP-L-glycero-beta-D-manno-heptose from D-glycero-beta-D-manno-heptose 7-phosphate: step 1/4. The protein operates within nucleotide-sugar biosynthesis; ADP-L-glycero-beta-D-manno-heptose biosynthesis; ADP-L-glycero-beta-D-manno-heptose from D-glycero-beta-D-manno-heptose 7-phosphate: step 3/4. Its function is as follows. Catalyzes the phosphorylation of D-glycero-D-manno-heptose 7-phosphate at the C-1 position to selectively form D-glycero-beta-D-manno-heptose-1,7-bisphosphate. In terms of biological role, catalyzes the ADP transfer from ATP to D-glycero-beta-D-manno-heptose 1-phosphate, yielding ADP-D-glycero-beta-D-manno-heptose. This Methylococcus capsulatus (strain ATCC 33009 / NCIMB 11132 / Bath) protein is Bifunctional protein HldE.